A 425-amino-acid chain; its full sequence is Aromatic prenyl transferase PC-22 (425 aa).

L-tryptophan is bound by residues 83–84 (GI) and E92. Residues R107, K198, Y200, R265, K267, Y269, Y345, Y410, and Y414 each contribute to the substrate site.

This sequence belongs to the tryptophan dimethylallyltransferase family. Homodimer.

It participates in secondary metabolite biosynthesis. Aromatic prenyl transferase; part of the gene cluster that mediates the biosynthesis of the indole diterpenes penitrems. The geranylgeranyl diphosphate (GGPP) synthase penG catalyzes the first step in penitrem biosynthesis via conversion of farnesyl pyrophosphate and isopentyl pyrophosphate into geranylgeranyl pyrophosphate (GGPP). Condensation of indole-3-glycerol phosphate with GGPP by the prenyl transferase penC then forms 3-geranylgeranylindole (3-GGI). Epoxidation by the FAD-dependent monooxygenase penM leads to a epoxidized-GGI that is substrate of the terpene cyclase penB for cyclization to yield paspaline. Paspaline is subsequently converted to 13-desoxypaxilline by the cytochrome P450 monooxygenase penP, the latter being then converted to paxilline by the cytochrome P450 monooxygenase penQ. Paxilline is converted to beta-paxitriol via C-10 ketoreduction by the short-chain dehydrogenase PC-15 which can be monoprenylated at the C-20 by the indole diterpene prenyltransferase penD. A two-step elimination (acetylation and elimination) process performed by the O-acetyltransferase PC-16 and the P.simplicissimum ptmI-ortholog not yet identified in P.crustosum, leads to the production of the prenylated form of penijanthine. The FAD-linked oxidoreductase ptmO then converts the prenylated form of penijanthine into PC-M5 which is in turn transformed into PC-M4 by the aromatic dimethylallyltransferase PC-22. A series of oxidation steps involving 4 cytochrome P450 monooxygenases (PC-21, PC-05, PC-23, PC-20) and a FAD-dependent monooxygenase (PC-14) are required for the transformation of PC-M4 to penitrems A and E. Synthesis of these final products is proposed to proceed via penitrems D and C (PC-21, PC-05, PC-14) and penitrems B and F (PC-21, PC-05, PC-14, PC-23). The sequence is that of Aromatic prenyl transferase PC-22 from Penicillium crustosum (Blue mold fungus).